A 141-amino-acid chain; its full sequence is Hemoglobin subunit alpha-D (141 aa).

The region spanning 1–141 (MLNAEDKKLI…VSAVLAEKYR (141 aa)) is the Globin domain. Residues H58 and H87 each contribute to the heme b site.

This sequence belongs to the globin family. As to quaternary structure, heterotetramer of two alpha-D chains and two beta chains. As to expression, red blood cells.

Functionally, involved in oxygen transport from the lung to the various peripheral tissues. This is Hemoglobin subunit alpha-D (HBAD) from Phasianus colchicus colchicus (Black-necked pheasant).